We begin with the raw amino-acid sequence, 102 residues long: Small ribosomal subunit protein uS10 (102 aa).

Belongs to the universal ribosomal protein uS10 family. Part of the 30S ribosomal subunit.

In terms of biological role, involved in the binding of tRNA to the ribosomes. The protein is Small ribosomal subunit protein uS10 of Clostridium botulinum (strain ATCC 19397 / Type A).